Here is a 321-residue protein sequence, read N- to C-terminus: Beta-1,3-N-acetylglucosaminyltransferase manic fringe (321 aa).

Residues 1 to 7 (MQCRLPR) are Cytoplasmic-facing. Residues 8 to 27 (GLAGALLTLLCMGLLCLRYH) form a helical; Signal-anchor for type II membrane protein membrane-spanning segment. Residues 28–321 (LNLSPQRVQE…TPWCPQLGAR (294 aa)) lie on the Lumenal side of the membrane. Position 70 (arginine 70) interacts with substrate. Asparagine 109 carries an N-linked (GlcNAc...) asparagine glycan. Cystine bridges form between cysteine 110-cysteine 121 and cysteine 139-cysteine 202. Position 143 (aspartate 143) interacts with substrate. Aspartate 144 serves as a coordination point for Mn(2+). A glycan (N-linked (GlcNAc...) asparagine) is linked at asparagine 185. Aspartate 232 is a catalytic residue. Histidine 256 lines the Mn(2+) pocket. Cysteine 306 and cysteine 315 are disulfide-bonded.

Belongs to the glycosyltransferase 31 family. It depends on Mn(2+) as a cofactor.

The protein resides in the golgi apparatus membrane. The catalysed reaction is 3-O-(alpha-L-fucosyl)-L-threonyl-[EGF-like domain protein] + UDP-N-acetyl-alpha-D-glucosamine = 3-O-(N-acetyl-beta-D-glucosaminyl-(1-&gt;3)-alpha-L-fucosyl)-L-threonyl-[EGF-like domain protein] + UDP + H(+). It carries out the reaction 3-O-(alpha-L-fucosyl)-L-seryl-[EGF-like domain protein] + UDP-N-acetyl-alpha-D-glucosamine = 3-O-(N-acetyl-beta-D-glucosaminyl-(1-&gt;3)-alpha-L-fucosyl)-L-seryl-[EGF-like domain protein] + UDP + H(+). Its function is as follows. Glycosyltransferase that initiates the elongation of O-linked fucose residues attached to EGF-like repeats in the extracellular domain of Notch molecules. Modulates NOTCH1 activity by modifying O-fucose residues at specific EGF-like domains resulting in inhibition of NOTCH1 activation by JAG1 and enhancement of NOTCH1 activation by DLL1 via an increase in its binding to DLL1. The sequence is that of Beta-1,3-N-acetylglucosaminyltransferase manic fringe (MFNG) from Pan troglodytes (Chimpanzee).